Reading from the N-terminus, the 204-residue chain is Large ribosomal subunit protein eL15 (204 aa).

It belongs to the eukaryotic ribosomal protein eL15 family. As to quaternary structure, component of the large ribosomal subunit.

Its subcellular location is the cytoplasm. Its function is as follows. Component of the large ribosomal subunit. The ribosome is a large ribonucleoprotein complex responsible for the synthesis of proteins in the cell. The polypeptide is Large ribosomal subunit protein eL15 (rpl15) (Hypophthalmichthys nobilis (Bighead carp)).